The sequence spans 1157 residues: ATP-dependent helicase/deoxyribonuclease subunit B (1157 aa).

Residues 1–278 (MTLQIIAGRS…FFLENKRAKT (278 aa)) enclose the UvrD-like helicase ATP-binding domain. 8-15 (GRSGTGKT) lines the ATP pocket. Residues 272 to 590 (ENKRAKTESL…VLSDMENAKL (319 aa)) enclose the UvrD-like helicase C-terminal domain. The [4Fe-4S] cluster site is built by Cys-794, Cys-1115, Cys-1118, and Cys-1124.

This sequence belongs to the helicase family. AddB/RexB type 1 subfamily. In terms of assembly, heterodimer of AddA and AddB. Requires Mg(2+) as cofactor. [4Fe-4S] cluster serves as cofactor.

In terms of biological role, the heterodimer acts as both an ATP-dependent DNA helicase and an ATP-dependent, dual-direction single-stranded exonuclease. Recognizes the chi site generating a DNA molecule suitable for the initiation of homologous recombination. The AddB subunit has 5' -&gt; 3' nuclease activity but not helicase activity. This is ATP-dependent helicase/deoxyribonuclease subunit B from Listeria monocytogenes serotype 4a (strain HCC23).